Reading from the N-terminus, the 529-residue chain is uncharacterized protein (529 aa).

To M.jannaschii MJ1451.

This is an uncharacterized protein from Methanothermobacter thermautotrophicus (strain ATCC 29096 / DSM 1053 / JCM 10044 / NBRC 100330 / Delta H) (Methanobacterium thermoautotrophicum).